We begin with the raw amino-acid sequence, 132 residues long: ATP synthase epsilon chain (132 aa).

This sequence belongs to the ATPase epsilon chain family. In terms of assembly, F-type ATPases have 2 components, CF(1) - the catalytic core - and CF(0) - the membrane proton channel. CF(1) has five subunits: alpha(3), beta(3), gamma(1), delta(1), epsilon(1). CF(0) has three main subunits: a, b and c.

The protein localises to the cell inner membrane. Its function is as follows. Produces ATP from ADP in the presence of a proton gradient across the membrane. This Cereibacter sphaeroides (strain ATCC 17025 / ATH 2.4.3) (Rhodobacter sphaeroides) protein is ATP synthase epsilon chain.